A 98-amino-acid polypeptide reads, in one-letter code: C-X-C motif chemokine 10 (98 aa).

The N-terminal stretch at 1–21 (MNQTAILICCLIFLTLSGIQG) is a signal peptide. Residue Arg26 is modified to Citrulline; by PAD2. Intrachain disulfides connect Cys30–Cys57 and Cys32–Cys74.

This sequence belongs to the intercrine alpha (chemokine CxC) family. As to quaternary structure, monomer, dimer, and tetramer. Interacts with CXCR3 (via N-terminus). Post-translationally, several proteases can mediate post-secretion cleavages. DPP4 cleaves CXCL10 on its N-terminal 2 amino acids leading to an antagonist form of CXCL10. This dominant negative form is capable of binding CXCR3 but does not induce signaling. MMP9 cleaves 9 amino acids instead. Mainly secreted by monocytes, endothelial cells as well as fibroblasts. Expressed by epithelial cells in thymus. Microglial cells produce CXCL10 in response to viral stimulation.

The protein localises to the secreted. Pro-inflammatory cytokine that is involved in a wide variety of processes such as chemotaxis, differentiation, and activation of peripheral immune cells, regulation of cell growth, apoptosis and modulation of angiostatic effects. Plays thereby an important role during viral infections by stimulating the activation and migration of immune cells to the infected sites. Mechanistically, binding of CXCL10 to the CXCR3 receptor activates G protein-mediated signaling and results in downstream activation of phospholipase C-dependent pathway, an increase in intracellular calcium production and actin reorganization. In turn, recruitment of activated Th1 lymphocytes occurs at sites of inflammation. Activation of the CXCL10/CXCR3 axis also plays an important role in neurons in response to brain injury for activating microglia, the resident macrophage population of the central nervous system, and directing them to the lesion site. This recruitment is an essential element for neuronal reorganization. The polypeptide is C-X-C motif chemokine 10 (CXCL10) (Homo sapiens (Human)).